The following is a 23-amino-acid chain: Phallacidin proprotein (23 aa).

P1 is a propeptide. A cross-link (cyclopeptide (Ala-Pro)) is located at residues 2-8 (AWLVDCP). A cross-link (2'-cysteinyl-6'-hydroxytryptophan sulfoxide (Trp-Cys)) is located at residues 3–7 (WLVDC). A propeptide spanning residues 9-23 (CVGDDVNRLLARGEK) is cleaved from the precursor.

This sequence belongs to the MSDIN fungal toxin family. Processed by the macrocyclase-peptidase enzyme POPB to yield a toxic cyclic heptapeptide. POPB first removes 10 residues from the N-terminus. Conformational trapping of the remaining peptide forces the enzyme to release this intermediate rather than proceed to macrocyclization. The enzyme rebinds the remaining peptide in a different conformation and catalyzes macrocyclization of the N-terminal 7 residues.

Major toxin that belongs to the bicyclic heptapeptides called phallotoxins. Although structurally related to amatoxins, phallotoxins have a different mode of action, which is the stabilization of F-actin. Phallotoxins are poisonous when administered parenterally, but not orally because of poor absorption. The sequence is that of Phallacidin proprotein from Amanita fuliginea (East Asian brown death cap).